A 194-amino-acid chain; its full sequence is uncharacterized protein (194 aa).

A helical membrane pass occupies residues 17–37; that stretch reads DVWLYLLVFGCLSVLVLVLVH.

This sequence belongs to the IIV-6 307L family.

It localises to the membrane. This is an uncharacterized protein from Invertebrate iridescent virus 3 (IIV-3).